Consider the following 120-residue polypeptide: Large ribosomal subunit protein bL20 (120 aa).

The protein belongs to the bacterial ribosomal protein bL20 family.

Its function is as follows. Binds directly to 23S ribosomal RNA and is necessary for the in vitro assembly process of the 50S ribosomal subunit. It is not involved in the protein synthesizing functions of that subunit. The chain is Large ribosomal subunit protein bL20 from Blochmanniella pennsylvanica (strain BPEN).